The following is a 619-amino-acid chain: Sodium-dependent dopamine transporter (619 aa).

At 1–56 the chain is on the cytoplasmic side; the sequence is MSKSKCSVGPMSSVVAPAKESNAVGPREVELILVKEQNGVQLTNSTLINPPQTPVE. The discontinuously helical transmembrane segment at 57 to 95 threads the bilayer; that stretch reads AQERETWSKKIDFLLSVIGFAVDLANVWRFPYLCYKNGG. Glycine 75, alanine 77, valine 78, aspartate 79, and asparagine 82 together coordinate Na(+). Aspartate 79 is a dopamine binding site. 2 helical membrane passes run 96-127 and 128-171; these read GAFLVPYLLFMVIAGMPLFYMELALGQFNREG and AAGV…FSSF. Residues serine 149 and glycine 153 each contribute to the dopamine site. The Extracellular portion of the chain corresponds to 172–235; it reads TMDLPWIHCN…SRGIDDLGPP (64 aa). A disulfide bridge connects residues cysteine 180 and cysteine 189. N-linked (GlcNAc...) asparagine glycosylation is found at asparagine 181, asparagine 188, asparagine 196, and asparagine 204. 2 helical membrane passes run 236 to 255 and 256 to 286; these read RWQLTACLVLVIVLLYFSLW and KGVKTSGKVVWITATMPYVVLTALLLRGVTL. The Extracellular portion of the chain corresponds to 287-305; that stretch reads PGAMDGIRAYLSVDFYRLC. The discontinuously helical transmembrane segment at 306-334 threads the bilayer; sequence EASVWIDAATQVCFSLGVGFGVLIAFSSY. Glutamine 316 is a chloride binding site. Phenylalanine 319 lines the dopamine pocket. Residues serine 320 and asparagine 352 each coordinate Na(+). Serine 320 provides a ligand contact to chloride. The chain crosses the membrane as a helical span at residues 335–375; that stretch reads NKFTNNCYRDAIITTSINSLTSFSSGFVVFSFLGYMAQKHN. Serine 356 serves as a coordination point for chloride. The Extracellular segment spans residues 376 to 399; sequence VPIRDVATDGPGLIFIIYPEAIAT. 3 helical membrane passes run 400-441, 442-465, and 466-498; these read LPLS…QLLH, RHRELFTLGIVLATFLLSLFCVTN, and GGIYVFTLLDHFAAGTSILFGVLIEAIGVAWFY. Na(+) is bound by residues leucine 417, aspartate 420, and serine 421. The dopamine site is built by serine 421 and alanine 422. At 499–515 the chain is on the cytoplasmic side; the sequence is GVQQFSDDIKQMTGQRP. Residues 516–541 traverse the membrane as a helical segment; that stretch reads NLYWRLCWKLVSPCFLLYVVVVSIVT. The Extracellular portion of the chain corresponds to 542–552; the sequence is FRPPHYGAYIF. Residues 553-582 form a helical membrane-spanning segment; sequence PDWANALGWIIATSSMAMVPIYATYKFCSL. Residues 560–589 form an interaction with TGFB1I1 region; the sequence is GWIIATSSMAMVPIYATYKFCSLPGSFREK. At 583–619 the chain is on the cytoplasmic side; it reads PGSFREKLAYAITPEKDHQLVDRGEVRQFTLRHWLLL.

The protein belongs to the sodium:neurotransmitter symporter (SNF) (TC 2.A.22) family. SLC6A3 subfamily. As to quaternary structure, monomer. Homooligomer; disulfide-linked. Interacts with PRKCABP and TGFB1I1. Interacts (via N-terminus) with SYNGR3 (via N-terminus). Interacts with SLC18A2. Interacts with TOR1A (ATP-bound); TOR1A regulates SLC6A3 subcellular location. Interacts with alpha-synuclein/SNCA. Interacts with SEPTIN4. As to expression, brain. Expressed in the substantia nigra and ventral tegmental area, regions that contain dopaminergic cell bodies.

Its subcellular location is the cell membrane. It is found in the cell projection. The protein resides in the neuron projection. The protein localises to the axon. It carries out the reaction dopamine(out) + chloride(out) + Na(+)(out) = dopamine(in) + chloride(in) + Na(+)(in). The catalysed reaction is (R)-noradrenaline(out) + chloride(out) + Na(+)(out) = (R)-noradrenaline(in) + chloride(in) + Na(+)(in). The enzyme catalyses dopamine(out) + chloride(out) + 2 Na(+)(out) = dopamine(in) + chloride(in) + 2 Na(+)(in). Inhibited by mazindol, cocaine, desipramine, GBR 12783 dihydrochloride, GBR 12909 dihydrochloride and nomifensine. Inhibited by zinc ions. In terms of biological role, mediates sodium- and chloride-dependent transport of dopamine. Also mediates sodium- and chloride-dependent transport of norepinephrine (also known as noradrenaline). Regulator of light-dependent retinal hyaloid vessel regression, downstream of OPN5 signaling. In Rattus norvegicus (Rat), this protein is Sodium-dependent dopamine transporter (Slc6a3).